Here is a 260-residue protein sequence, read N- to C-terminus: BTB/POZ domain-containing protein KCTD21 (260 aa).

Residues 3 to 72 (DPITLNVGGK…LRTSHLDLPE (70 aa)) enclose the BTB domain. A coiled-coil region spans residues 88-112 (QVQPLIEALQEKEVELSKAEKNAML).

In terms of assembly, homopentamer. Interacts with KCTD11; KCTD21 and KCTD11 may associate in pentameric assemblies. Interacts (via BTB domain) with CUL3; indicative for a participation in a BCR (BTB-CUL3-RBX1) E3 ubiquitin-protein ligase complex. Highly expressed in cerebellum and brain. Expression is down-regulated in medulloblastoma.

It participates in protein modification; protein ubiquitination. Probable substrate-specific adapter of a BCR (BTB-CUL3-RBX1) E3 ubiquitin-protein ligase complex mediating the ubiquitination and subsequent proteasomal degradation of target proteins. Promotes the ubiquitination of HDAC1. Can function as antagonist of the Hedgehog pathway by affecting the nuclear transfer of transcription factor GLI1; the function probably occurs via HDAC1 down-regulation, keeping GLI1 acetylated and inactive. Inhibits cell growth and tumorigenicity of medulloblastoma (MDB). This Homo sapiens (Human) protein is BTB/POZ domain-containing protein KCTD21 (KCTD21).